The sequence spans 395 residues: Acid ceramidase (395 aa).

An N-terminal signal peptide occupies residues 1-21; it reads MPGRSRVALVLLAAAVSCAVA. A disulfide bond links Cys-31 and Cys-340. Cys-143 acts as the Nucleophile in catalysis. Asn-195, Asn-259, Asn-286, and Asn-342 each carry an N-linked (GlcNAc...) asparagine glycan. Cys-388 and Cys-392 form a disulfide bridge.

It belongs to the acid ceramidase family. In terms of assembly, heterodimer; disulfide-linked. The heterodimer is composed of the disulfide-linked alpha and beta chains produced by autocatalytic cleavage of the precursor. In terms of processing, N-glycosylated. Post-translationally, proteolytically cleaved into two chains alpha and beta that remain associated via a disulfide bond. Cleavage gives rise to a conformation change that activates the enzyme. The same catalytic Cys residue mediates the autoproteolytic cleavage and subsequent hydrolysis of lipid substrates. The beta chain may undergo an additional C-terminal processing.

It localises to the lysosome. The protein localises to the secreted. It catalyses the reaction an N-acylsphing-4-enine + H2O = sphing-4-enine + a fatty acid. The catalysed reaction is N-dodecanoylsphing-4-enine + H2O = dodecanoate + sphing-4-enine. It carries out the reaction N-tetradecanoylsphing-4-enine + H2O = tetradecanoate + sphing-4-enine. The enzyme catalyses N-hexadecanoylsphing-4-enine + H2O = sphing-4-enine + hexadecanoate. It catalyses the reaction N-octadecanoylsphing-4-enine + H2O = sphing-4-enine + octadecanoate. The catalysed reaction is N-dodecanoyl-(4R)-hydroxysphinganine + H2O = (4R)-hydroxysphinganine + dodecanoate. It carries out the reaction N-(dodecanoyl)-sphinganine + H2O = dodecanoate + sphinganine. The enzyme catalyses N-(acetyl)-sphing-4-enine + H2O = sphing-4-enine + acetate. It catalyses the reaction N-(hexanoyl)sphing-4-enine + H2O = hexanoate + sphing-4-enine. The catalysed reaction is N-octanoylsphing-4-enine + H2O = octanoate + sphing-4-enine. It carries out the reaction N-(9Z-octadecenoyl)-sphing-4-enine + H2O = sphing-4-enine + (9Z)-octadecenoate. The enzyme catalyses N-dodecanoylethanolamine + H2O = dodecanoate + ethanolamine. It participates in lipid metabolism; sphingolipid metabolism. Its function is as follows. Lysosomal ceramidase that hydrolyzes sphingolipid ceramides into sphingosine and free fatty acids at acidic pH. Ceramides, sphingosine, and its phosphorylated form sphingosine-1-phosphate are bioactive lipids that mediate cellular signaling pathways regulating several biological processes including cell proliferation, apoptosis and differentiation. Has a higher catalytic efficiency towards C12-ceramides versus other ceramides. Also catalyzes the reverse reaction allowing the synthesis of ceramides from fatty acids and sphingosine. For the reverse synthetic reaction, the natural sphingosine D-erythro isomer is more efficiently utilized as a substrate compared to D-erythro-dihydrosphingosine and D-erythro-phytosphingosine, while the fatty acids with chain lengths of 12 or 14 carbons are the most efficiently used. Also has an N-acylethanolamine hydrolase activity. By regulating the levels of ceramides, sphingosine and sphingosine-1-phosphate in the epidermis, mediates the calcium-induced differentiation of epidermal keratinocytes. Also indirectly regulates tumor necrosis factor/TNF-induced apoptosis. By regulating the intracellular balance between ceramides and sphingosine, in adrenocortical cells, probably also acts as a regulator of steroidogenesis. This Pan troglodytes (Chimpanzee) protein is Acid ceramidase.